A 495-amino-acid chain; its full sequence is Serine/threonine-protein kinase F (495 aa).

The region spanning 46–314 (YLPVKLLGQG…ASAEEVLAVL (269 aa)) is the Protein kinase domain. ATP contacts are provided by residues 52–60 (LGQGGFGAA) and K77. D187 functions as the Proton acceptor in the catalytic mechanism. A disordered region spans residues 316 to 354 (GGKGNQGKAPPGATVSTPQGTNTQIQPTPASSASPLTAP). Positions 329–350 (TVSTPQGTNTQIQPTPASSASP) are enriched in polar residues.

This sequence belongs to the protein kinase superfamily. Ser/Thr protein kinase family.

It catalyses the reaction L-seryl-[protein] + ATP = O-phospho-L-seryl-[protein] + ADP + H(+). It carries out the reaction L-threonyl-[protein] + ATP = O-phospho-L-threonyl-[protein] + ADP + H(+). This is Serine/threonine-protein kinase F (spkF) from Synechocystis sp. (strain ATCC 27184 / PCC 6803 / Kazusa).